The sequence spans 478 residues: Glycogen synthase (478 aa).

ADP-alpha-D-glucose is bound at residue Lys-15.

It belongs to the glycosyltransferase 1 family. Bacterial/plant glycogen synthase subfamily.

The catalysed reaction is [(1-&gt;4)-alpha-D-glucosyl](n) + ADP-alpha-D-glucose = [(1-&gt;4)-alpha-D-glucosyl](n+1) + ADP + H(+). It participates in glycan biosynthesis; glycogen biosynthesis. Its function is as follows. Synthesizes alpha-1,4-glucan chains using ADP-glucose. This chain is Glycogen synthase, found in Caldicellulosiruptor bescii (strain ATCC BAA-1888 / DSM 6725 / KCTC 15123 / Z-1320) (Anaerocellum thermophilum).